The sequence spans 387 residues: Exodeoxyribonuclease 7 large subunit (387 aa).

The protein belongs to the XseA family. In terms of assembly, heterooligomer composed of large and small subunits.

It localises to the cytoplasm. It catalyses the reaction Exonucleolytic cleavage in either 5'- to 3'- or 3'- to 5'-direction to yield nucleoside 5'-phosphates.. Its function is as follows. Bidirectionally degrades single-stranded DNA into large acid-insoluble oligonucleotides, which are then degraded further into small acid-soluble oligonucleotides. This is Exodeoxyribonuclease 7 large subunit from Parasynechococcus marenigrum (strain WH8102).